The primary structure comprises 347 residues: MSDSESEEATKINTDPVDNAWSLKIPAFKETDNPHGMIEESSFATLFPKYREKYLKEVWPLVEQAVGEHHLKAELDLVEGSMVVKTTRKTWDPYIIIKARDMIKLMARSVPFEQAKRVLQDEIGCDIIKIGNLVQKKEKFVKRRQRLIGPNGATLKSIELLTDCYVLVQGNTVSALGPYKGLQQVRDIVLETMNNVHPIYNIKALMIKRELMKDPKLANEDWSRFLPKFKNKNLSKRKQPKVKKPKKEYTPFPPAQPESKIDKQLASGEYFLNKEQKQAKRQQERQTKQAEAAKKQDERRNKDFIPPTEEPPTGSKRKANDNDSSDSRVDVQSLKAKLLKANKKSKS.

The region spanning 124–194 is the KH domain; that stretch reads GCDIIKIGNL…VRDIVLETMN (71 aa). Residues 231 to 246 are compositionally biased toward basic residues; that stretch reads NKNLSKRKQPKVKKPK. Residues 231 to 347 are disordered; sequence NKNLSKRKQP…LLKANKKSKS (117 aa). The stretch at 271-304 forms a coiled coil; the sequence is FLNKEQKQAKRQQERQTKQAEAAKKQDERRNKDF. Basic and acidic residues-rich tracts occupy residues 272–303 and 318–329; these read LNKEQKQAKRQQERQTKQAEAAKKQDERRNKD and KANDNDSSDSRV. The segment covering 337 to 347 has biased composition (basic residues); it reads KLLKANKKSKS.

It belongs to the KRR1 family. As to quaternary structure, monomer. Component of the ribosomal small subunit (SSU) processome.

Its subcellular location is the nucleus. The protein localises to the nucleolus. Required for 40S ribosome biogenesis. Involved in nucleolar processing of pre-18S ribosomal RNA and ribosome assembly. Binds to RNA. Required for female germline development, cell viability during eye development and for survival of dividing cells and epithelial cells during early wing disk development. This chain is KRR1 small subunit processome component homolog, found in Drosophila willistoni (Fruit fly).